A 414-amino-acid chain; its full sequence is Glyco-Gag protein (414 aa).

The Cytoplasmic segment spans residues Met-1 to Arg-51. The helical transmembrane segment at Leu-52–Glu-72 threads the bilayer. The Extracellular segment spans residues Thr-73–Val-414. Asn-134 carries an N-linked (GlcNAc...) asparagine; by host glycan. The disordered stretch occupies residues Val-171–Gln-282. Positions Phe-174–Ser-193 are enriched in pro residues. Residues Ala-194–Lys-206 are compositionally biased toward low complexity. The segment covering Pro-210–Ser-220 has biased composition (pro residues).

In terms of processing, glycosylated by host. Cleaved by host near the middle of the molecule, releasing the c-terminal half containing capsid and nucleoprotein domains op GAG.

It is found in the host cell membrane. Functionally, plays a role in viral particle release. Presumably acts by facilitating the fission of the virion bud at the cell surface. The polypeptide is Glyco-Gag protein (Felidae (cat family)).